The following is a 1480-amino-acid chain: Heme-responsive zinc finger transcription factor HAP1 (1480 aa).

The span at 1–50 shows a compositional bias: polar residues; sequence MSNTPYNSSVPSIASMTQSSVSRSPNMHTATTPGANTSSNSPPLHMSSDS. The segment at 1–56 is disordered; sequence MSNTPYNSSVPSIASMTQSSVSRSPNMHTATTPGANTSSNSPPLHMSSDSSKIKRK. Positions 64, 67, 74, 81, 84, and 93 each coordinate Zn(2+). The zn(2)-C6 fungal-type DNA-binding region spans 64 to 93; it reads CTICRKRKVKCDKLRPHCQQCTKTGVAHLC. A coiled-coil region spans residues 105-134; sequence EKELLKDNELKKLRERVKSLEKTLSKVHSS. The segment at 126-208 is disordered; it reads KTLSKVHSSP…ANSSSLSISN (83 aa). The span at 130–142 shows a compositional bias: low complexity; that stretch reads KVHSSPSSNSLKS. Composition is skewed to polar residues over residues 143–152 and 160–176; these read YNTPESSNLF and TLVNANTGSASSASHMH. Residues 177–208 are compositionally biased toward low complexity; it reads QQQQQQQQQEQQQDFSRSANANANSSSLSISN. Positions 244-441 are heme-responsive; required for HMC formation; that stretch reads KGDPYLKLLW…NTIPHHQPQS (198 aa). HRM repeat units lie at residues 280–285, 296–301, 320–325, 344–349, 386–391, and 412–417; these read KCPINH, KCPVDH, RCPVDH, and RCPIDH. Composition is skewed to polar residues over residues 429-444 and 703-731; these read STHNTIPHHQPQSGSH and QLNATIPATSQDVSNNGSKKANPSTNPTL. 2 disordered regions span residues 429–456 and 703–764; these read STHNTIPHHQPQSGSHARSHPAQSRKHD and QLNA…KENQ. Low complexity predominate over residues 732–756; that stretch reads NNNMSAATTNSSSRSGSADSRSGSN. The HRM 7 repeat unit spans residues 1189–1194; that stretch reads KCPVYQ. The disordered stretch occupies residues 1381-1408; the sequence is TANTDTSANGSALSTLTSPQGSDLASNS. The span at 1385–1408 shows a compositional bias: polar residues; sequence DTSANGSALSTLTSPQGSDLASNS.

As to quaternary structure, binds DNA as a homodimer. Interacts with SRO9 and YDJ1. In the absence of heme, binds to at least four cellular proteins, including YDJ1 and SRO9, forming a high-molecular-weight complex (HMC) which results in repression of its activity and dictates its DNA-binding specificity.

The protein localises to the nucleus. Functionally, regulation of oxygen dependent gene expression. It modulates the expression of Iso-1 (CYP1) and Iso-2 (CYP3) cytochrome c. In response to heme, promotes transcription of genes encoding functions required for respiration, controlling oxidative damage and repression of anaerobic genes. Binds to the sequence 5'-CGGNNNTNNCGG-3'. Is non-functional in terms of iso-1 cytochrome c expression in strain S288c and its derivatives. The chain is Heme-responsive zinc finger transcription factor HAP1 (HAP1) from Saccharomyces cerevisiae (strain Kyokai no. 7 / NBRC 101557) (Baker's yeast).